We begin with the raw amino-acid sequence, 109 residues long: Flagellar transcriptional regulator FlhD (109 aa).

Belongs to the FlhD family. Homodimer; disulfide-linked. Forms a heterohexamer composed of two FlhC and four FlhD subunits. Each FlhC binds a FlhD dimer, forming a heterotrimer, and a hexamer assembles by dimerization of two heterotrimers.

It is found in the cytoplasm. In terms of biological role, functions in complex with FlhC as a master transcriptional regulator that regulates transcription of several flagellar and non-flagellar operons by binding to their promoter region. Activates expression of class 2 flagellar genes, including fliA, which is a flagellum-specific sigma factor that turns on the class 3 genes. Also regulates genes whose products function in a variety of physiological pathways. This chain is Flagellar transcriptional regulator FlhD, found in Acidovorax sp. (strain JS42).